Reading from the N-terminus, the 622-residue chain is DNA mismatch repair protein MutL (622 aa).

Belongs to the DNA mismatch repair MutL/HexB family.

In terms of biological role, this protein is involved in the repair of mismatches in DNA. It is required for dam-dependent methyl-directed DNA mismatch repair. May act as a 'molecular matchmaker', a protein that promotes the formation of a stable complex between two or more DNA-binding proteins in an ATP-dependent manner without itself being part of a final effector complex. The sequence is that of DNA mismatch repair protein MutL from Actinobacillus pleuropneumoniae serotype 3 (strain JL03).